A 298-amino-acid chain; its full sequence is Olfactory receptor 52Z1P (298 aa).

At 1–14 (MGIPGLEGLHTWIS) the chain is on the extracellular side. The chain crosses the membrane as a helical span at residues 15–35 (IPFSFMYIVAVAGNIFLIFLI). The Cytoplasmic segment spans residues 36-43 (MTERSLHE). A helical membrane pass occupies residues 44–64 (PMYLFLSMLASADFLLATAAA). Residues 65–85 (PKVLAILWFHSMDISFGSCVS) are Extracellular-facing. A disulfide bond links Cys83 and Cys164. A helical membrane pass occupies residues 86-106 (QMFFIHFIFVAESAILLAMAF). Residues 107 to 128 (DRYVAICYPLRYTILTSSAVRK) are Cytoplasmic-facing. A helical membrane pass occupies residues 129–149 (IGIAAVVRSFFICCPFIFLVY). Residues 150–178 (RLTYCGRNIIPHSYCEHIARLACGNINVN) are Extracellular-facing. The helical transmembrane segment at 179-199 (IIYGLTVALLSTGLDIVLIII) threads the bilayer. The Cytoplasmic segment spans residues 200–223 (SYTMILHSVFQISSWAARFKALST). Residues 224–244 (CGSHICVIFMFYTPAFFSFLA) form a helical membrane-spanning segment. Over 245–257 (HRFGGKTIPHHIH) the chain is Extracellular. Residues 258-278 (ILVGSLYVLVPPMLNPIIYGV) form a helical membrane-spanning segment. The Cytoplasmic segment spans residues 279 to 298 (KTKQIKDRVILLFSPISVCC).

This sequence belongs to the G-protein coupled receptor 1 family.

The protein resides in the cell membrane. Its function is as follows. Odorant receptor. The protein is Olfactory receptor 52Z1P of Homo sapiens (Human).